The chain runs to 55 residues: Riparin-1.4 (55 aa).

The N-terminal stretch at 1–15 is a signal peptide; it reads MKIIVVLAVLMLVSA. A propeptide spanning residues 16–41 is cleaved from the precursor; the sequence is QVCLVSAAEMGHSSDNELSSRDLVKR. Cysteine 47 and cysteine 53 are oxidised to a cystine. A propeptide spanning residues 54-55 is cleaved from the precursor; the sequence is NH.

As to expression, expressed by the skin glands.

Its subcellular location is the secreted. This is Riparin-1.4 from Crinia riparia (Streambank froglet).